A 192-amino-acid chain; its full sequence is UPF0312 protein YE1254 (192 aa).

Positions 1 to 23 (MFNKTLLGLTVGALMFTAGSAVA) are cleaved as a signal peptide.

It belongs to the UPF0312 family. Type 1 subfamily.

Its subcellular location is the periplasm. The chain is UPF0312 protein YE1254 from Yersinia enterocolitica serotype O:8 / biotype 1B (strain NCTC 13174 / 8081).